The chain runs to 243 residues: Voltage-gated monoatomic cation channel TMEM109 (243 aa).

An N-terminal signal peptide occupies residues 1-33 (MAGSGSSAPWGKHLLHAVLMVLVALVLLHSALA). Residues 34–83 (QSHRDFAPPGQQRREAPVDLLTQIGRSVRETLDTWIGPETMHLISETLSQ) lie on the Lumenal side of the membrane. Residues 84–104 (VMWAISSAISVAFFALSGIAA) traverse the membrane as a helical segment. Topologically, residues 105–135 (QLLTALGLDGDHLTQGLKLSPSQVQTFLLWG) are cytoplasmic. A helical transmembrane segment spans residues 136-156 (AGALVVYWLLSLLLGLVLAVL). Residues 157–185 (GRILGGLKLVIFLAGFVALVRSVPDPSTR) are Lumenal-facing. The chain crosses the membrane as a helical span at residues 186-205 (ALLLLALLTLYALLSRLTGS). Topologically, residues 206 to 243 (RASGAQLEAKVRGLERQVDELRWRQRRAAKGARSVEEE) are cytoplasmic.

As to quaternary structure, homooligomer. Interacts with CRYAB; in the cellular response to DNA damage. Post-translationally, the N-terminus is blocked. Widely expressed. Expressed in skeletal, cardiac and smooth muscle cells, in brain, including neuroglial cells, cerebral cortex neurons and cerebellum, but not Purkinje cells. Also detected in Paneth and Goblet cells of the small intestine (but not in the epithelium), duodenal gland, pancreas, parotid gland, testis, thyroid gland and adrenal gland, as well as in epidermis, choroid plexus, ductus epididymidis, lymphocytes, fibroblasts, endothelial cells and seminiferous epithelial cells (at protein level). Not detected in mucous cells of the duodenal gland, in hepatocytes nor in uriniferous tubules.

Its subcellular location is the nucleus outer membrane. It is found in the endoplasmic reticulum membrane. The protein localises to the sarcoplasmic reticulum membrane. The enzyme catalyses K(+)(in) = K(+)(out). It catalyses the reaction Ca(2+)(in) = Ca(2+)(out). Functions as a voltage-gated monoatomic cation channel permeable to both potassium and calcium. Plays a role in the cellular response to DNA damage. The protein is Voltage-gated monoatomic cation channel TMEM109 of Oryctolagus cuniculus (Rabbit).